A 630-amino-acid chain; its full sequence is Biosynthetic arginine decarboxylase (630 aa).

Lys99 carries the N6-(pyridoxal phosphate)lysine modification. Position 281–291 (Val281–Tyr291) interacts with substrate.

This sequence belongs to the Orn/Lys/Arg decarboxylase class-II family. SpeA subfamily. The cofactor is Mg(2+). It depends on pyridoxal 5'-phosphate as a cofactor.

The enzyme catalyses L-arginine + H(+) = agmatine + CO2. It participates in amine and polyamine biosynthesis; agmatine biosynthesis; agmatine from L-arginine: step 1/1. In terms of biological role, catalyzes the biosynthesis of agmatine from arginine. The chain is Biosynthetic arginine decarboxylase from Phocaeicola vulgatus (strain ATCC 8482 / DSM 1447 / JCM 5826 / CCUG 4940 / NBRC 14291 / NCTC 11154) (Bacteroides vulgatus).